The primary structure comprises 680 residues: DNA-directed RNA polymerase subunit beta' (680 aa).

Positions 69, 71, 87, and 90 each coordinate Zn(2+). Mg(2+) contacts are provided by D489, D491, and D493.

This sequence belongs to the RNA polymerase beta' chain family. RpoC1 subfamily. In terms of assembly, in plastids the minimal PEP RNA polymerase catalytic core is composed of four subunits: alpha, beta, beta', and beta''. When a (nuclear-encoded) sigma factor is associated with the core the holoenzyme is formed, which can initiate transcription. It depends on Mg(2+) as a cofactor. The cofactor is Zn(2+).

The protein localises to the plastid. It localises to the chloroplast. The enzyme catalyses RNA(n) + a ribonucleoside 5'-triphosphate = RNA(n+1) + diphosphate. DNA-dependent RNA polymerase catalyzes the transcription of DNA into RNA using the four ribonucleoside triphosphates as substrates. The sequence is that of DNA-directed RNA polymerase subunit beta' from Lobularia maritima (Sweet alyssum).